We begin with the raw amino-acid sequence, 269 residues long: MKKYIISLIVFLSFYAQADLTDFRVATWNLQGASATTESKWNINVRQLISGENAVDILAVQEAGSPPSTAVDTGTLIPSPGIPVRELIWNLSTNSRPQQVYIYFSAVDALGGRVNLALVSNRRADEVFVLSPVRQGGRPLLGIRIGNDAFFTAHAIAMRNNDAPALVEEVYNFFRDSRDPVHQALNWMILGDFNREPADLEMNLTVPVRRASEIISPAAATQTSQRTLDYAVAGNSVAFRPSPLQAGIVYGARRTQISSDHFPVGVSRR.

The signal sequence occupies residues 1 to 18 (MKKYIISLIVFLSFYAQA). The Nuclear localization signal motif lies at 195-210 (REPADLEMNLTVPVRR).

As to quaternary structure, heterotrimer of 3 subunits, CdtA, CdtB and CdtC.

It localises to the secreted. Functionally, part of the tripartite complex that is required for the CDT activity. CdtB exhibits a DNA-nicking endonuclease activity, and very probably causes DNA damage in intoxicated cells. This damage induces G2/M cell cycle arrest, chromatin fragmentation, cell distention and nucleus enlargement. This Escherichia coli protein is Cytolethal distending toxin subunit B (cdtB).